Consider the following 423-residue polypeptide: Imidazolonepropionase (423 aa).

Fe(3+) is bound by residues histidine 87 and histidine 89. Positions 87 and 89 each coordinate Zn(2+). The 4-imidazolone-5-propanoate site is built by arginine 96, tyrosine 159, and histidine 192. Position 159 (tyrosine 159) interacts with N-formimidoyl-L-glutamate. Residue histidine 257 coordinates Fe(3+). A Zn(2+)-binding site is contributed by histidine 257. Glutamate 260 lines the 4-imidazolone-5-propanoate pocket. Aspartate 331 serves as a coordination point for Fe(3+). Position 331 (aspartate 331) interacts with Zn(2+). N-formimidoyl-L-glutamate-binding residues include asparagine 333 and glycine 335. Residue serine 336 coordinates 4-imidazolone-5-propanoate.

Belongs to the metallo-dependent hydrolases superfamily. HutI family. It depends on Zn(2+) as a cofactor. Requires Fe(3+) as cofactor.

Its subcellular location is the cytoplasm. The enzyme catalyses 4-imidazolone-5-propanoate + H2O = N-formimidoyl-L-glutamate. The protein operates within amino-acid degradation; L-histidine degradation into L-glutamate; N-formimidoyl-L-glutamate from L-histidine: step 3/3. Catalyzes the hydrolytic cleavage of the carbon-nitrogen bond in imidazolone-5-propanoate to yield N-formimidoyl-L-glutamate. It is the third step in the universal histidine degradation pathway. This is Imidazolonepropionase from Porphyromonas gingivalis (strain ATCC 33277 / DSM 20709 / CIP 103683 / JCM 12257 / NCTC 11834 / 2561).